Reading from the N-terminus, the 134-residue chain is Profilin-3 (134 aa).

Cysteines 13 and 118 form a disulfide. The Involved in PIP2 interaction signature appears at 84–100 (AVIRGKKGSGGITIKKT). A Phosphothreonine modification is found at T114.

It belongs to the profilin family. As to quaternary structure, occurs in many kinds of cells as a complex with monomeric actin in a 1:1 ratio. In terms of processing, phosphorylated by MAP kinases.

It localises to the cytoplasm. The protein resides in the cytoskeleton. Its function is as follows. Binds to actin and affects the structure of the cytoskeleton. At high concentrations, profilin prevents the polymerization of actin, whereas it enhances it at low concentrations. This chain is Profilin-3, found in Olea europaea (Common olive).